We begin with the raw amino-acid sequence, 469 residues long: Histone acetyltransferase ESA1 (469 aa).

The disordered stretch occupies residues 1 to 26 (MALAEADLPNGKTNGKASGSEETPAP). Polar residues predominate over residues 11–21 (GKTNGKASGSE). In terms of domain architecture, Tudor-knot spans 39 to 92 (LRVGCKVHVEKDGEDRVAEILSVQMRRGNLEFYVHYVEFNKRLDERIAATRVDL). Residues 98-163 (WPEPEKPKKP…GTTQDPDNFN (66 aa)) are disordered. The span at 118–127 (EKKKNPSKKQ) shows a compositional bias: basic residues. Polar residues-rich tracts occupy residues 130 to 139 (TDSAATTPGA) and 150 to 160 (LQVNGTTQDPD). The region spanning 185-457 (ARVRNLQRIV…VNSELLKWKP (273 aa)) is the MYST-type HAT domain. A C2HC MYST-type; degenerate zinc finger spans residues 218-243 (IYICDFTLCYFGSKKQFERFRSKSTL). K285 is subject to N6-acetyllysine; by autocatalysis. Acetyl-CoA is bound by residues 326 to 330 (ACILT) and 335 to 341 (QRHGYGR). The Proton donor/acceptor role is filled by E361. S365 is an acetyl-CoA binding site.

The protein belongs to the MYST (SAS/MOZ) family. In terms of assembly, component of the NuA4 histone acetyltransferase complex. In terms of processing, autoacetylation at Lys-285 is required for proper function.

Its subcellular location is the nucleus. It localises to the chromosome. The catalysed reaction is L-lysyl-[histone] + acetyl-CoA = N(6)-acetyl-L-lysyl-[histone] + CoA + H(+). It catalyses the reaction L-lysyl-[protein] + acetyl-CoA = N(6)-acetyl-L-lysyl-[protein] + CoA + H(+). The enzyme catalyses 2-hydroxyisobutanoyl-CoA + L-lysyl-[protein] = N(6)-(2-hydroxyisobutanoyl)-L-lysyl-[protein] + CoA + H(+). It carries out the reaction (2E)-butenoyl-CoA + L-lysyl-[protein] = N(6)-(2E)-butenoyl-L-lysyl-[protein] + CoA + H(+). Its function is as follows. Catalytic component of the NuA4 histone acetyltransferase (HAT) complex which is involved in epigenetic transcriptional activation of selected genes principally by acetylation of nucleosomal histones H4, H3, H2B, H2A and H2A variant H2A.Z. Acetylates histone H4 to form H4K5ac, H4K8ac, H4K12ac and H4K16ac, histone H3 to form H3K14ac, and histone H2A to form H2AK4ac and H2AK7ac. The NuA4 complex is involved in the DNA damage response and is required for chromosome segregation. The NuA4 complex plays a direct role in repair of DNA double-strand breaks (DSBs) through homologous recombination. Recruitment to promoters depends on H3K4me. Also acetylates non-histone proteins. In addition to protein acetyltransferase, can use different acyl-CoA substrates, such as 2-hydroxyisobutanoyl-CoA (2-hydroxyisobutyryl-CoA) or (2E)-butenoyl-CoA (crotonyl-CoA), and is able to mediate protein 2-hydroxyisobutyrylation and crotonylation, respectively. The sequence is that of Histone acetyltransferase ESA1 (ESA1) from Yarrowia lipolytica (strain CLIB 122 / E 150) (Yeast).